We begin with the raw amino-acid sequence, 506 residues long: MGSVCMRLWAYLQPFLPCWSQEADKSVVIENPGAYCPPEANRSQGQYFVALFDYEARTAEDLSFHAGDKLQVLDTSHEGWWLARHLEKKGPGLGQQLQGYIPSNYVAEDRSLQAEPWFFGAIKRADAEKQLLYSENQTGAFLIRESESQKGDFSLSVLDEGVVKHYRIRRLDEGGFFLTRRKTFSTLNEFVNYYTTTSDGLCVKLEKPCLKIQVPTPFDLSYKTVDQWEIDRNSIQLLKRLGSGQFGEVWEGLWNNTTPVAVKTLKPGSMDPNDFLREAQIMKSLRHPKLIQLYAVCTLEDPIYIITELMRHGSLQEYLQNDGGSKIRLTQQVDMAAQVASGMAYLESQNYIHRDLAARNVLVGEHNIYKVADFGLARVFKVDNEDIYESKHEIKLPVKWTAPEAIRTNKFSIKSDVWSFGILLYEIITYGKMPYSGMTGAQVIHMLGQNYRLPQPSNCPEQFYSIMMECWNVEPKQRPTFETLHWKLEDYFEPDSSYSDTNNFIN.

In terms of domain architecture, SH3 spans 43 to 111 (SQGQYFVALF…PSNYVAEDRS (69 aa)). The 93-residue stretch at 117–209 (WFFGAIKRAD…GLCVKLEKPC (93 aa)) folds into the SH2 domain. T179 bears the Phosphothreonine mark. Residues 235 to 492 (IQLLKRLGSG…TLHWKLEDYF (258 aa)) enclose the Protein kinase domain. Residues 241–249 (LGSGQFGEV) and K263 each bind ATP. The Proton acceptor role is filled by D355. The residue at position 388 (Y388) is a Phosphotyrosine; by autocatalysis.

The protein belongs to the protein kinase superfamily. Tyr protein kinase family. SRC subfamily. In terms of assembly, interacts (via the SH3-domain) with PTEN. Interacts with RB1. In terms of tissue distribution, highly expressed in stomach, small intestine and colon. Concentrated in the brush border membranes of epithelial cells, throughout the maturation axis of the adult small intestine.

It is found in the cytoplasm. The protein localises to the nucleus. The catalysed reaction is L-tyrosyl-[protein] + ATP = O-phospho-L-tyrosyl-[protein] + ADP + H(+). Its function is as follows. Non-receptor tyrosine-protein kinase that negatively regulates cell proliferation. Positively regulates PTEN protein stability through phosphorylation of PTEN on 'Tyr-336', which in turn prevents its ubiquitination and degradation, possibly by reducing its binding to NEDD4. May function as a tumor suppressor. This is Tyrosine-protein kinase FRK (Frk) from Rattus norvegicus (Rat).